Reading from the N-terminus, the 293-residue chain is Cell wall protein PGA31 (293 aa).

A signal peptide spans 1–18 (MKFLTAASLLTLSSSALA). N-linked (GlcNAc...) asparagine glycosylation is present at asparagine 131. The tract at residues 161-187 (ESASSSSSSAAPEPTASSSEAPKETPV) is disordered. Low complexity predominate over residues 163–180 (ASSSSSSAAPEPTASSSE). The N-linked (GlcNAc...) asparagine glycan is linked to asparagine 190. Positions 233–262 (VPSKTASSEAAPPKTTVDSVSKPAPSGKKP) are disordered. Glycine 271 is lipidated: GPI-anchor amidated glycine. Residues 272-293 (AANALTGGSVAIAVAAAIGLVF) constitute a propeptide, removed in mature form.

Belongs to the SRP1/TIP1 family. The GPI-anchor is attached to the protein in the endoplasmic reticulum and serves to target the protein to the cell surface. There, the glucosamine-inositol phospholipid moiety is cleaved off and the GPI-modified mannoprotein is covalently attached via its lipidless GPI glycan remnant to the 1,6-beta-glucan of the outer cell wall layer.

Its subcellular location is the secreted. It localises to the cell wall. The protein localises to the membrane. Component of the cell wall involved in virulence which plays a role in the relationship between C.albicans and the host. Involved in the regulation or assembly of chitin within the cell wall. The protein is Cell wall protein PGA31 (PGA31) of Candida albicans (strain SC5314 / ATCC MYA-2876) (Yeast).